Consider the following 84-residue polypeptide: Small ribosomal subunit protein uS17 (84 aa).

It belongs to the universal ribosomal protein uS17 family. In terms of assembly, part of the 30S ribosomal subunit.

Functionally, one of the primary rRNA binding proteins, it binds specifically to the 5'-end of 16S ribosomal RNA. The polypeptide is Small ribosomal subunit protein uS17 (Hamiltonella defensa subsp. Acyrthosiphon pisum (strain 5AT)).